A 44-amino-acid polypeptide reads, in one-letter code: uncharacterized protein (44 aa).

The N-terminal stretch at 1–16 (MRISLLAVILALLFVA) is a signal peptide.

This is an uncharacterized protein from Helicobacter pylori (strain ATCC 700392 / 26695) (Campylobacter pylori).